The primary structure comprises 405 residues: MSEIQLNTIEEAIEDFREGKFLIVVDDEDRENEGDFIIAAEKVTPEKINFMLKNGRGVLCAPITEERCQELELDMQVANNTSLLGTPFTITVDKLGGKCTTGVSMYDRAETILALADPKTKPSDLGRPGHINPLRARSRGVLRRAGHTEAAVDLARLAGLYPAGALIEIINEDGTMARLPQLIEVAKKFDIKIICIKDLIAYRLRTESIVENGVEVDLPTEYGHFRLIPFRQKSNGLEHIALIKGKFEKDEPILVRVHSSCATGDIFGSMRCECGEQLHEAMRRIDQEGKGVIVYLNQEGRGIGLMEKMKAYKLQEDGLDTVDANLHLGHQADERDYGVGAQILRHIGVTKMRLMSNNPVKRVGLEAYGLEVVENVPIEVKPNPYNEFYMKTKKERMGHVLHNIK.

The tract at residues 1 to 205 (MSEIQLNTIE…IKDLIAYRLR (205 aa)) is DHBP synthase. D-ribulose 5-phosphate contacts are provided by residues 30–31 (RE), D35, 144–148 (RAGHT), and E168. E31 contributes to the Mg(2+) binding site. H147 serves as a coordination point for Mg(2+). Residues 206-405 (TESIVENGVE…RMGHVLHNIK (200 aa)) are GTP cyclohydrolase II. 256 to 260 (RVHSS) contributes to the GTP binding site. The Zn(2+) site is built by C261, C272, and C274. GTP is bound by residues Q277, 299–301 (EGR), and T321. D333 functions as the Proton acceptor; for GTP cyclohydrolase activity in the catalytic mechanism. The active-site Nucleophile; for GTP cyclohydrolase activity is R335. Residues S356 and K361 each coordinate GTP.

In the N-terminal section; belongs to the DHBP synthase family. The protein in the C-terminal section; belongs to the GTP cyclohydrolase II family. Requires Mg(2+) as cofactor. It depends on Mn(2+) as a cofactor. Zn(2+) is required as a cofactor.

The enzyme catalyses D-ribulose 5-phosphate = (2S)-2-hydroxy-3-oxobutyl phosphate + formate + H(+). It catalyses the reaction GTP + 4 H2O = 2,5-diamino-6-hydroxy-4-(5-phosphoribosylamino)-pyrimidine + formate + 2 phosphate + 3 H(+). It participates in cofactor biosynthesis; riboflavin biosynthesis; 2-hydroxy-3-oxobutyl phosphate from D-ribulose 5-phosphate: step 1/1. The protein operates within cofactor biosynthesis; riboflavin biosynthesis; 5-amino-6-(D-ribitylamino)uracil from GTP: step 1/4. In terms of biological role, catalyzes the conversion of D-ribulose 5-phosphate to formate and 3,4-dihydroxy-2-butanone 4-phosphate. Its function is as follows. Catalyzes the conversion of GTP to 2,5-diamino-6-ribosylamino-4(3H)-pyrimidinone 5'-phosphate (DARP), formate and pyrophosphate. The chain is Riboflavin biosynthesis protein RibBA from Parabacteroides distasonis (strain ATCC 8503 / DSM 20701 / CIP 104284 / JCM 5825 / NCTC 11152).